Here is a 124-residue protein sequence, read N- to C-terminus: V-type proton ATPase subunit F 1 (124 aa).

Position 87 is a phosphoserine (serine 87).

The protein belongs to the V-ATPase F subunit family. In terms of assembly, V-ATPase is a heteromultimeric enzyme made up of two complexes: the ATP-hydrolytic V1 complex and the proton translocation V0 complex. The V1 complex consists of three catalytic AB heterodimers that form a heterohexamer, three peripheral stalks each consisting of EG heterodimers, one central rotor including subunits D and F, and the regulatory subunits C and H. The proton translocation complex V0 consists of the proton transport subunit a, a ring of proteolipid subunits c9c'', rotary subunit d, subunits e and f, and the accessory subunits VhaAC45 and ATP6AP2.

Functionally, subunit of the V1 complex of vacuolar(H+)-ATPase (V-ATPase), a multisubunit enzyme composed of a peripheral complex (V1) that hydrolyzes ATP and a membrane integral complex (V0) that translocates protons. V-ATPase is responsible for acidifying and maintaining the pH of intracellular compartments and in some cell types, is targeted to the plasma membrane, where it is responsible for acidifying the extracellular environment. The sequence is that of V-type proton ATPase subunit F 1 (Vha14-1) from Drosophila melanogaster (Fruit fly).